Here is a 616-residue protein sequence, read N- to C-terminus: Spastin (616 aa).

The segment at methionine 1–glutamate 43 is disordered. The tract at residues methionine 1–leucine 50 is required for nuclear localization. Residues methionine 1–proline 56 are Cytoplasmic-facing. The segment at methionine 1–glutamine 80 is required for interaction with ATL1. The segment at methionine 1–leucine 194 is required for midbody localization. The tract at residues methionine 1 to lysine 300 is required for interaction with RTN1. The Nuclear localization signal motif lies at proline 4–lysine 11. Residues proline 19 to glutamate 43 show a composition bias toward pro residues. A required for interaction with SSNA1 and microtubules region spans residues leucine 50–methionine 87. The segment at residues leucine 57–tryptophan 77 is an intramembrane region (helical). The Nuclear export signal motif lies at valine 59–valine 67. Over leucine 78–valine 616 the chain is Cytoplasmic. Positions glutamate 112 to glutamate 196 are sufficient for interaction with CHMP1B. The segment at glutamate 114–proline 200 is required for interaction with microtubules. Residues histidine 120–leucine 195 enclose the MIT domain. A disordered region spans residues histidine 224 to alanine 266. Positions glutamate 228–valine 616 are sufficient for microtubule severing. The segment covering threonine 240–lysine 254 has biased composition (polar residues). A phosphoserine mark is found at serine 245 and serine 268. The interval serine 270–isoleucine 328 is required for interaction with microtubules and microtubule severing. The tract at residues valine 278–lysine 312 is disordered. Positions histidine 289 to alanine 307 are enriched in polar residues. Residue threonine 306 is modified to Phosphothreonine. Positions arginine 309–lysine 312 match the Nuclear localization signal motif. Residues lysine 310–lysine 312 form a required for interaction with microtubules region. Residue glycine 382–threonine 389 coordinates ATP. Position 597 is a phosphoserine (serine 597).

It belongs to the AAA ATPase family. Spastin subfamily. Homohexamer. Mostly monomeric, but assembles into hexameric structure for short periods of time. Oligomerization seems to be a prerequisite for catalytic activity. Binding to ATP in a cleft between two adjacent subunits stabilizes the homohexameric form. Binds to microtubules at least in part via the alpha-tubulin and beta-tubulin tails. The hexamer adopts a ring conformation through which microtubules pass prior to being severed. Does not interact strongly with tubulin heterodimers. Interacts (via MIT domain) with CHMP1B; the interaction is direct. Interacts with SSNA1. Interacts with ATL1. Interacts with RTN1. Interacts with ZFYVE27. Isoform 1 but not isoform 3 interacts with RTN2. Interacts with REEP1. Interacts (via MIT domain) with IST1. As to expression, expressed in brain, heart, kidney, liver, lung, pancreas, placenta and skeletal muscle. The short isoforms may predominate in brain and spinal cord.

It is found in the membrane. Its subcellular location is the endoplasmic reticulum. The protein localises to the midbody. It localises to the cytoplasm. The protein resides in the cytoskeleton. It is found in the microtubule organizing center. Its subcellular location is the centrosome. The protein localises to the perinuclear region. It localises to the nucleus. The protein resides in the spindle. It is found in the cell projection. Its subcellular location is the axon. The protein localises to the endoplasmic reticulum membrane. It localises to the nucleus membrane. The protein resides in the lipid droplet. It is found in the endosome. The enzyme catalyses n ATP + n H2O + a microtubule = n ADP + n phosphate + (n+1) alpha/beta tubulin heterodimers.. With respect to regulation, allosteric enzyme with a cooperative mechanism; at least two neighbor subunits influence each other strongly in spastin hexamers. Microtubule binding promotes cooperative interactions among spastin subunits. ATP-bound enzyme interacts strongly and cooperatively with microtubules; this interaction stimulates ATP hydrolysis. In terms of biological role, ATP-dependent microtubule severing protein that specifically recognizes and cuts microtubules that are polyglutamylated. Preferentially recognizes and acts on microtubules decorated with short polyglutamate tails: severing activity increases as the number of glutamates per tubulin rises from one to eight, but decreases beyond this glutamylation threshold. Severing activity is not dependent on tubulin acetylation or detyrosination. Microtubule severing promotes reorganization of cellular microtubule arrays and the release of microtubules from the centrosome following nucleation. It is critical for the biogenesis and maintenance of complex microtubule arrays in axons, spindles and cilia. SPAST is involved in abscission step of cytokinesis and nuclear envelope reassembly during anaphase in cooperation with the ESCRT-III complex. Recruited at the midbody, probably by IST1, and participates in membrane fission during abscission together with the ESCRT-III complex. Recruited to the nuclear membrane by IST1 and mediates microtubule severing, promoting nuclear envelope sealing and mitotic spindle disassembly during late anaphase. Required for membrane traffic from the endoplasmic reticulum (ER) to the Golgi and endosome recycling. Recruited by IST1 to endosomes and regulates early endosomal tubulation and recycling by mediating microtubule severing. Probably plays a role in axon growth and the formation of axonal branches. Its function is as follows. Involved in lipid metabolism by regulating the size and distribution of lipid droplets. The protein is Spastin of Homo sapiens (Human).